A 345-amino-acid chain; its full sequence is Phenylalanine--tRNA ligase alpha subunit (345 aa).

Glu-259 provides a ligand contact to Mg(2+).

The protein belongs to the class-II aminoacyl-tRNA synthetase family. Phe-tRNA synthetase alpha subunit type 1 subfamily. In terms of assembly, tetramer of two alpha and two beta subunits. The cofactor is Mg(2+).

The protein localises to the cytoplasm. The catalysed reaction is tRNA(Phe) + L-phenylalanine + ATP = L-phenylalanyl-tRNA(Phe) + AMP + diphosphate + H(+). The chain is Phenylalanine--tRNA ligase alpha subunit from Lactococcus lactis subsp. cremoris (strain SK11).